Consider the following 66-residue polypeptide: Large ribosomal subunit protein uL29 (66 aa).

Belongs to the universal ribosomal protein uL29 family.

The polypeptide is Large ribosomal subunit protein uL29 (Thermotoga sp. (strain RQ2)).